Here is a 170-residue protein sequence, read N- to C-terminus: S-ribosylhomocysteine lyase (170 aa).

Positions 54, 58, and 128 each coordinate Fe cation.

Belongs to the LuxS family. Homodimer. Fe cation serves as cofactor.

It catalyses the reaction S-(5-deoxy-D-ribos-5-yl)-L-homocysteine = (S)-4,5-dihydroxypentane-2,3-dione + L-homocysteine. Functionally, involved in the synthesis of autoinducer 2 (AI-2) which is secreted by bacteria and is used to communicate both the cell density and the metabolic potential of the environment. The regulation of gene expression in response to changes in cell density is called quorum sensing. Catalyzes the transformation of S-ribosylhomocysteine (RHC) to homocysteine (HC) and 4,5-dihydroxy-2,3-pentadione (DPD). This Marinomonas sp. (strain MWYL1) protein is S-ribosylhomocysteine lyase.